The sequence spans 147 residues: Secreted RxLR effector protein BLN04 (147 aa).

Residues M1–G23 form the signal peptide. The dEER signature appears at S58–R61. Residues V117 to I137 form a helical membrane-spanning segment.

This sequence belongs to the RxLR effector family. As to quaternary structure, interacts with host transcription factor NAC069.

The protein localises to the secreted. It localises to the host membrane. Functionally, secreted effector that inhibits stress-induced relocalization of the transcription factor NAC069 to the nucleus, thus affecting its broad role in abiotic and biotic stress responses. This chain is Secreted RxLR effector protein BLN04, found in Bremia lactucae (Lettuce downy mildew).